The primary structure comprises 1711 residues: Reverse gyrase (1711 aa).

The RG N-terminal-type zinc finger occupies 1-39 (MKAVYREMCPNCWGRISDERLVMRNPCEECLDEPVHADS). Residues Cys-9, Cys-12, Cys-27, and Cys-30 each contribute to the Zn(2+) site. Residues Gln-89 and 106 to 113 (APTGMGKS) contribute to the ATP site. One can recognise a Helicase ATP-binding domain in the interval 93–256 (VKRLLKGRSF…RLKKQMSRYL (164 aa)). Residues 213-216 (DDVD) carry the DEAD box motif. Residues 638 to 1711 (DLVRSALMIV…YSEIQRYVSG (1074 aa)) form a topoisomerase I region. The region spanning 642 to 805 (SALMIVESPN…NIKRIEFHEV (164 aa)) is the Toprim domain. Residue Glu-648 participates in Mg(2+) binding. Residues 722–751 (LKRCRDCGHQFVDWEKKGVCPRCGSTNVRD) form an RG C-terminal-type zinc finger. Zn(2+) is bound by residues Cys-725, Cys-728, Cys-741, and Cys-744. Asp-774 contributes to the Mg(2+) binding site. A Topo IA-type catalytic domain is found at 821–1709 (NENRVNAQIV…ELYSEIQRYV (889 aa)). One can recognise a DOD-type homing endonuclease domain in the interval 1160–1287 (VFGLVLGDGT…LSVYLYQIGI (128 aa)). Tyr-1452 acts as the O-(5'-phospho-DNA)-tyrosine intermediate in catalysis.

In the N-terminal section; belongs to the DEAD box helicase family. DDVD subfamily. This sequence in the C-terminal section; belongs to the type IA topoisomerase family. Monomer. Zn(2+) is required as a cofactor. The cofactor is Mg(2+). This protein undergoes a protein self splicing that involves a post-translational excision of the intervening region (intein) followed by peptide ligation.

The protein resides in the cytoplasm. It catalyses the reaction ATP + H2O = ADP + phosphate + H(+). Functionally, modifies the topological state of DNA by introducing positive supercoils in an ATP-dependent process, increasing the linking number in steps of +1. Binds to single-stranded DNA, transiently cleaves and then rejoins the ends, introducing a positive supercoil in the process. The scissile phosphodiester is attacked by the catalytic tyrosine of the enzyme, resulting in the formation of a DNA-(5'-phosphotyrosyl)-enzyme intermediate. Probably involved in rewinding DNA strands in regions of the chromosome that have opened up to allow replication, transcription, DNA repair and/or for DNA protection. The sequence is that of Reverse gyrase from Thermococcus kodakarensis (strain ATCC BAA-918 / JCM 12380 / KOD1) (Pyrococcus kodakaraensis (strain KOD1)).